The following is a 188-amino-acid chain: Accessory gene regulator protein B (188 aa).

A run of 4 helical transmembrane segments spans residues 49–69 (VALI…YFLV), 100–122 (VYFQ…LIIY), 143–163 (LLSI…PEPF), and 164–184 (KQLI…IFFP).

The protein belongs to the AgrB family.

Its subcellular location is the cell membrane. In terms of biological role, essential for the production of a quorum sensing system signal molecule, the autoinducing peptide (AIP). This quorum sensing system is responsible for the regulation of the expression of virulence factor genes. Involved in the proteolytic processing of AgrD, the precursor of AIP. In Staphylococcus haemolyticus (strain JCSC1435), this protein is Accessory gene regulator protein B.